Here is a 229-residue protein sequence, read N- to C-terminus: UPF0758 protein CLL_A0562 (229 aa).

One can recognise an MPN domain in the interval 107-229 (KIMSPNDLAM…FISLKEKGFI (123 aa)). Residues histidine 178, histidine 180, and aspartate 191 each contribute to the Zn(2+) site. Residues 178–191 (HNHPSGDPTPSKED) carry the JAMM motif motif.

The protein belongs to the UPF0758 family.

This chain is UPF0758 protein CLL_A0562, found in Clostridium botulinum (strain Eklund 17B / Type B).